The sequence spans 201 residues: Guanylyl cyclase-activating protein 1 (201 aa).

Residue G2 is the site of N-myristoyl glycine attachment. N3 is modified (deamidated asparagine). EF-hand domains are found at residues 31 to 49 (SGQL…KNLS), 51 to 86 (SASQ…VLKG), 87 to 122 (KVEQ…IRAI), and 131 to 166 (TAEE…DQML). Positions 64, 66, 68, 70, 75, 100, 102, 104, 106, 111, 144, 146, 148, 150, and 155 each coordinate Ca(2+).

Homodimer. As to expression, in the retina, it is expressed in rod and cone photoreceptors.

The protein localises to the membrane. Its subcellular location is the photoreceptor inner segment. It is found in the cell projection. It localises to the cilium. The protein resides in the photoreceptor outer segment. Stimulates retinal guanylyl cyclase when free calcium ions concentration is low and inhibits guanylyl cyclase when free calcium ions concentration is elevated. This Ca(2+)-sensitive regulation of retinal guanylyl cyclase is a key event in recovery of the dark state of rod photoreceptors following light exposure. May be involved in cone photoreceptor light response and recovery of response in bright light. The sequence is that of Guanylyl cyclase-activating protein 1 (GUCA1A) from Homo sapiens (Human).